We begin with the raw amino-acid sequence, 205 residues long: Thiamine-phosphate synthase (205 aa).

4-amino-2-methyl-5-(diphosphooxymethyl)pyrimidine is bound by residues 37–41 (QVREK) and Asn-69. Asp-70 and Asp-89 together coordinate Mg(2+). 4-amino-2-methyl-5-(diphosphooxymethyl)pyrimidine is bound at residue Ser-108. Residue 134–136 (TGS) coordinates 2-[(2R,5Z)-2-carboxy-4-methylthiazol-5(2H)-ylidene]ethyl phosphate. Residue Lys-137 coordinates 4-amino-2-methyl-5-(diphosphooxymethyl)pyrimidine. Residues Gly-165 and 185-186 (IS) each bind 2-[(2R,5Z)-2-carboxy-4-methylthiazol-5(2H)-ylidene]ethyl phosphate.

The protein belongs to the thiamine-phosphate synthase family. It depends on Mg(2+) as a cofactor.

The enzyme catalyses 2-[(2R,5Z)-2-carboxy-4-methylthiazol-5(2H)-ylidene]ethyl phosphate + 4-amino-2-methyl-5-(diphosphooxymethyl)pyrimidine + 2 H(+) = thiamine phosphate + CO2 + diphosphate. It catalyses the reaction 2-(2-carboxy-4-methylthiazol-5-yl)ethyl phosphate + 4-amino-2-methyl-5-(diphosphooxymethyl)pyrimidine + 2 H(+) = thiamine phosphate + CO2 + diphosphate. The catalysed reaction is 4-methyl-5-(2-phosphooxyethyl)-thiazole + 4-amino-2-methyl-5-(diphosphooxymethyl)pyrimidine + H(+) = thiamine phosphate + diphosphate. It functions in the pathway cofactor biosynthesis; thiamine diphosphate biosynthesis; thiamine phosphate from 4-amino-2-methyl-5-diphosphomethylpyrimidine and 4-methyl-5-(2-phosphoethyl)-thiazole: step 1/1. Condenses 4-methyl-5-(beta-hydroxyethyl)thiazole monophosphate (THZ-P) and 2-methyl-4-amino-5-hydroxymethyl pyrimidine pyrophosphate (HMP-PP) to form thiamine monophosphate (TMP). The protein is Thiamine-phosphate synthase of Clostridium botulinum (strain Langeland / NCTC 10281 / Type F).